The primary structure comprises 208 residues: Guanylate kinase (208 aa).

A Guanylate kinase-like domain is found at 4–185 (GNLYILSAPS…ALADLVHILR (182 aa)). 11-18 (APSGAGKS) serves as a coordination point for ATP.

Belongs to the guanylate kinase family.

It is found in the cytoplasm. The catalysed reaction is GMP + ATP = GDP + ADP. Essential for recycling GMP and indirectly, cGMP. This is Guanylate kinase from Mannheimia succiniciproducens (strain KCTC 0769BP / MBEL55E).